We begin with the raw amino-acid sequence, 330 residues long: Ketol-acid reductoisomerase (NADP(+)) (330 aa).

In terms of domain architecture, KARI N-terminal Rossmann spans 1-181 (MKVLYDDDVN…GLTRAGVIET (181 aa)). NADP(+) contacts are provided by residues 24 to 27 (YGSQ), Arg47, Ser52, and 82 to 85 (DEIQ). The active site involves His107. Gly133 provides a ligand contact to NADP(+). The KARI C-terminal knotted domain maps to 182–327 (TYREETETDL…KNLRIACGLQ (146 aa)). Positions 190, 194, 226, and 230 each coordinate Mg(2+). Ser251 contacts substrate.

This sequence belongs to the ketol-acid reductoisomerase family. Requires Mg(2+) as cofactor.

It carries out the reaction (2R)-2,3-dihydroxy-3-methylbutanoate + NADP(+) = (2S)-2-acetolactate + NADPH + H(+). The catalysed reaction is (2R,3R)-2,3-dihydroxy-3-methylpentanoate + NADP(+) = (S)-2-ethyl-2-hydroxy-3-oxobutanoate + NADPH + H(+). The protein operates within amino-acid biosynthesis; L-isoleucine biosynthesis; L-isoleucine from 2-oxobutanoate: step 2/4. Its pathway is amino-acid biosynthesis; L-valine biosynthesis; L-valine from pyruvate: step 2/4. Functionally, involved in the biosynthesis of branched-chain amino acids (BCAA). Catalyzes an alkyl-migration followed by a ketol-acid reduction of (S)-2-acetolactate (S2AL) to yield (R)-2,3-dihydroxy-isovalerate. In the isomerase reaction, S2AL is rearranged via a Mg-dependent methyl migration to produce 3-hydroxy-3-methyl-2-ketobutyrate (HMKB). In the reductase reaction, this 2-ketoacid undergoes a metal-dependent reduction by NADPH to yield (R)-2,3-dihydroxy-isovalerate. This Methanosphaera stadtmanae (strain ATCC 43021 / DSM 3091 / JCM 11832 / MCB-3) protein is Ketol-acid reductoisomerase (NADP(+)).